Consider the following 347-residue polypeptide: Sulfate/thiosulfate import ATP-binding protein CysA 1 (347 aa).

In terms of domain architecture, ABC transporter spans 3–237 (VRVESLRKEF…PVSPFVYGFI (235 aa)). ATP is bound at residue 35-42 (GPSGSGKT).

It belongs to the ABC transporter superfamily. Sulfate/tungstate importer (TC 3.A.1.6) family. As to quaternary structure, the complex is composed of two ATP-binding proteins (CysA), two transmembrane proteins (CysT and CysW) and a solute-binding protein (CysP).

The protein localises to the cell inner membrane. The enzyme catalyses sulfate(out) + ATP + H2O = sulfate(in) + ADP + phosphate + H(+). It catalyses the reaction thiosulfate(out) + ATP + H2O = thiosulfate(in) + ADP + phosphate + H(+). In terms of biological role, part of the ABC transporter complex CysAWTP involved in sulfate/thiosulfate import. Responsible for energy coupling to the transport system. This is Sulfate/thiosulfate import ATP-binding protein CysA 1 from Rhizobium meliloti (strain 1021) (Ensifer meliloti).